Here is a 317-residue protein sequence, read N- to C-terminus: Putative 2-hydroxyacid dehydrogenase SAR2389 (317 aa).

Residues 155–156, 234–236, and Asp-260 each bind NAD(+); these read EI and ASR. The active site involves Arg-236. Residue Glu-265 is part of the active site. The active-site Proton donor is His-283. 283 to 286 contributes to the NAD(+) binding site; sequence HIGN.

Belongs to the D-isomer specific 2-hydroxyacid dehydrogenase family.

In Staphylococcus aureus (strain MRSA252), this protein is Putative 2-hydroxyacid dehydrogenase SAR2389.